A 230-amino-acid chain; its full sequence is Ribonuclease HII (230 aa).

An RNase H type-2 domain is found at 21-212 (GPVAGVDEVG…VRRVANGSGG (192 aa)). Residues aspartate 27, glutamate 28, and aspartate 121 each coordinate a divalent metal cation.

The protein belongs to the RNase HII family. It depends on Mn(2+) as a cofactor. Mg(2+) serves as cofactor.

It localises to the cytoplasm. The catalysed reaction is Endonucleolytic cleavage to 5'-phosphomonoester.. Functionally, endonuclease that specifically degrades the RNA of RNA-DNA hybrids. This Mycobacterium avium (strain 104) protein is Ribonuclease HII.